Here is a 645-residue protein sequence, read N- to C-terminus: UvrABC system protein B (645 aa).

One can recognise a Helicase ATP-binding domain in the interval 24-414 (AGLNDNKRDQ…LFVEQVIRPT (391 aa)). 37–44 (GVTGSGKT) lines the ATP pocket. Residues 90 to 113 (YYDYYQPEAYLPQTDTYIEKDSVI) carry the Beta-hairpin motif. The region spanning 426 to 591 (AEAQVYDVVH…VLPKTIIKPI (166 aa)) is the Helicase C-terminal domain. One can recognise a UVR domain in the interval 610 to 645 (KDTVSSLRKQMLAHAKNLEFEEAAKIKNIIGRINNL).

This sequence belongs to the UvrB family. Forms a heterotetramer with UvrA during the search for lesions. Interacts with UvrC in an incision complex.

It localises to the cytoplasm. In terms of biological role, the UvrABC repair system catalyzes the recognition and processing of DNA lesions. A damage recognition complex composed of 2 UvrA and 2 UvrB subunits scans DNA for abnormalities. Upon binding of the UvrA(2)B(2) complex to a putative damaged site, the DNA wraps around one UvrB monomer. DNA wrap is dependent on ATP binding by UvrB and probably causes local melting of the DNA helix, facilitating insertion of UvrB beta-hairpin between the DNA strands. Then UvrB probes one DNA strand for the presence of a lesion. If a lesion is found the UvrA subunits dissociate and the UvrB-DNA preincision complex is formed. This complex is subsequently bound by UvrC and the second UvrB is released. If no lesion is found, the DNA wraps around the other UvrB subunit that will check the other stand for damage. This is UvrABC system protein B from Wolbachia sp. subsp. Brugia malayi (strain TRS).